A 491-amino-acid polypeptide reads, in one-letter code: Probable glycine dehydrogenase (decarboxylating) subunit 2 (491 aa).

Position 273 is an N6-(pyridoxal phosphate)lysine (Lys-273).

This sequence belongs to the GcvP family. C-terminal subunit subfamily. In terms of assembly, the glycine cleavage system is composed of four proteins: P, T, L and H. In this organism, the P 'protein' is a heterodimer of two subunits. Pyridoxal 5'-phosphate is required as a cofactor.

It catalyses the reaction N(6)-[(R)-lipoyl]-L-lysyl-[glycine-cleavage complex H protein] + glycine + H(+) = N(6)-[(R)-S(8)-aminomethyldihydrolipoyl]-L-lysyl-[glycine-cleavage complex H protein] + CO2. Its function is as follows. The glycine cleavage system catalyzes the degradation of glycine. The P protein binds the alpha-amino group of glycine through its pyridoxal phosphate cofactor; CO(2) is released and the remaining methylamine moiety is then transferred to the lipoamide cofactor of the H protein. In Bacillus cereus (strain G9842), this protein is Probable glycine dehydrogenase (decarboxylating) subunit 2.